The primary structure comprises 117 residues: MKFQYKEVHPFEYRKKEGEKIRKKYPDRVPLIVEKAPKARVPDLDRRKYLVPSDLTDGQFYLLIRKRIHLRPEDALFFFVNNTIPPTSATMGQLYEDSHEEDDFLYVAYSNESVYGK.

Residues 1 to 22 (MKFQYKEVHPFEYRKKEGEKIR) are interaction with beta-tubulin. The interval 36-68 (APKARVPDLDRRKYLVPSDLTDGQFYLLIRKRI) is interaction with GABRG2. Residue Gly-116 is the site of Phosphatidylethanolamine amidated glycine attachment. Residue Lys-117 is a propeptide, removed in mature form.

The protein belongs to the ATG8 family. Interacts with GABRG2 and beta-tubulin. The precursor molecule is cleaved by ATG4B to form the cytosolic form, GABARAPL3-I. This is activated by APG7L/ATG7, transferred to ATG3 and conjugated to phospholipid to form the membrane-bound form, GABARAPL3-II. ATG4B also mediates the delipidation required for GABARAPL1 recycling when autophagosomes fuse with lysosomes. As to expression, ubiquitous. Expressed at very high levels in the brain, heart, peripheral blood leukocytes, liver, kidney, placenta and skeletal muscle. Expressed at very low levels in thymus and small intestine.

The protein localises to the cytoplasm. The protein resides in the cytoskeleton. It localises to the cytoplasmic vesicle. It is found in the autophagosome membrane. In terms of biological role, ubiquitin-like modifier involved in autophagosome formation. Whereas LC3s are involved in elongation of the phagophore membrane, the GABARAP/GATE-16 subfamily is essential for a later stage in autophagosome maturation. The polypeptide is Gamma-aminobutyric acid receptor-associated protein-like 3 (GABARAPL3) (Homo sapiens (Human)).